The following is a 742-amino-acid chain: Ion-translocating oxidoreductase complex subunit C (742 aa).

4Fe-4S ferredoxin-type domains lie at 369–397 (GEPQEEQSCIRCSACADACPADLLPQQLY) and 407–436 (KATTHNIADCIECGACAWVCPSNIPLVQYF). Residues Cys377, Cys380, Cys383, Cys387, Cys416, Cys419, Cys422, and Cys426 each coordinate [4Fe-4S] cluster. The interval 602-719 (KLEQQQANAE…PEEQVDPRKA (118 aa)) is disordered.

Belongs to the 4Fe4S bacterial-type ferredoxin family. RnfC subfamily. In terms of assembly, the complex is composed of six subunits: RsxA, RsxB, RsxC, RsxD, RsxE and RsxG. It depends on [4Fe-4S] cluster as a cofactor.

The protein resides in the cell inner membrane. In terms of biological role, part of a membrane-bound complex that couples electron transfer with translocation of ions across the membrane. Required to maintain the reduced state of SoxR. In Escherichia coli O6:H1 (strain CFT073 / ATCC 700928 / UPEC), this protein is Ion-translocating oxidoreductase complex subunit C.